Consider the following 180-residue polypeptide: Virion protein US10 homolog (180 aa).

It belongs to the herpesviridae US10 family. In terms of processing, phosphorylated.

Its subcellular location is the virion tegument. The protein localises to the host nucleus matrix. The sequence is that of Virion protein US10 homolog (64) from Varicella-zoster virus (strain Dumas) (HHV-3).